A 422-amino-acid chain; its full sequence is Probable protein phosphatase 2C 69 (422 aa).

The PPM-type phosphatase domain occupies 45–294 (TLLLAEAGER…DDTTCIVVDI (250 aa)). The Mn(2+) site is built by D70, G71, D246, and D285.

It belongs to the PP2C family. Mg(2+) serves as cofactor. It depends on Mn(2+) as a cofactor.

The catalysed reaction is O-phospho-L-seryl-[protein] + H2O = L-seryl-[protein] + phosphate. It carries out the reaction O-phospho-L-threonyl-[protein] + H2O = L-threonyl-[protein] + phosphate. This Oryza sativa subsp. japonica (Rice) protein is Probable protein phosphatase 2C 69.